The chain runs to 103 residues: RNA-binding protein Hfq (103 aa).

Positions 9–68 constitute a Sm domain; sequence DPFLNALRRERVPVSIYLVNGIKLQGQIESFDQFVILLKNTVSQMVYKHAISTVVPSRPV. Residues 63 to 103 are disordered; it reads VPSRPVSHHSNNAGGGTGSNFHHGSNAQGSSAPAQDSDETE. Positions 81–96 are enriched in polar residues; sequence SNFHHGSNAQGSSAPA.

Belongs to the Hfq family. In terms of assembly, homohexamer.

Its function is as follows. RNA chaperone that binds small regulatory RNA (sRNAs) and mRNAs to facilitate mRNA translational regulation in response to envelope stress, environmental stress and changes in metabolite concentrations. Also binds with high specificity to tRNAs. This is RNA-binding protein Hfq from Enterobacter sp. (strain 638).